Reading from the N-terminus, the 209-residue chain is ATP-dependent Clp protease proteolytic subunit (209 aa).

Catalysis depends on S113, which acts as the Nucleophile. The active site involves H138.

Belongs to the peptidase S14 family. As to quaternary structure, fourteen ClpP subunits assemble into 2 heptameric rings which stack back to back to give a disk-like structure with a central cavity, resembling the structure of eukaryotic proteasomes.

It is found in the cytoplasm. The catalysed reaction is Hydrolysis of proteins to small peptides in the presence of ATP and magnesium. alpha-casein is the usual test substrate. In the absence of ATP, only oligopeptides shorter than five residues are hydrolyzed (such as succinyl-Leu-Tyr-|-NHMec, and Leu-Tyr-Leu-|-Tyr-Trp, in which cleavage of the -Tyr-|-Leu- and -Tyr-|-Trp bonds also occurs).. Its function is as follows. Cleaves peptides in various proteins in a process that requires ATP hydrolysis. Has a chymotrypsin-like activity. Plays a major role in the degradation of misfolded proteins. This chain is ATP-dependent Clp protease proteolytic subunit, found in Blochmanniella floridana.